We begin with the raw amino-acid sequence, 960 residues long: Lon protease homolog, mitochondrial (960 aa).

The N-terminal 56 residues, 1 to 56 (MYRAGALVLRSATLRRTRFLAAHQNFATISSQRSSVLLAKSLESSIGGAGNQKKFY), are a transit peptide targeting the mitochondrion. One can recognise a Lon N-terminal domain in the interval 92 to 352 (VPILAINRYP…IALLLIQKEK (261 aa)). The segment at 195 to 250 (PKTDTPLNGRRARGKRAGLPPTPPPTPPLSTPTSAPEASATSPEEKEEKKDPERKG) is disordered. Residues 214 to 224 (PPTPPPTPPLS) are compositionally biased toward pro residues. The segment covering 225 to 236 (TPTSAPEASATS) has biased composition (low complexity). A compositionally biased stretch (basic and acidic residues) spans 237-250 (PEEKEEKKDPERKG). 505 to 512 (GPPGVGKT) is an ATP binding site. The interval 712 to 748 (EQQPEDEQPAATTAISENSDAEPVSTPSDPPTFTPEK) is disordered. A Lon proteolytic domain is found at 773–960 (VTPPGVIMGL…YDELYEHLFQ (188 aa)). Active-site residues include Ser867 and Lys910.

The protein belongs to the peptidase S16 family. As to quaternary structure, homohexamer or homoheptamer. Organized in a ring with a central cavity.

The protein resides in the mitochondrion matrix. It catalyses the reaction Hydrolysis of proteins in presence of ATP.. Its function is as follows. ATP-dependent serine protease that mediates the selective degradation of misfolded, unassembled or oxidatively damaged polypeptides as well as certain short-lived regulatory proteins in the mitochondrial matrix. May also have a chaperone function in the assembly of inner membrane protein complexes. Participates in the regulation of mitochondrial gene expression and in the maintenance of the integrity of the mitochondrial genome. Binds to mitochondrial DNA in a site-specific manner. This chain is Lon protease homolog, mitochondrial, found in Caenorhabditis briggsae.